Reading from the N-terminus, the 323-residue chain is Lipoyl synthase (323 aa).

Residues 1–14 (MVTILDRTKPDDKR) are compositionally biased toward basic and acidic residues. A disordered region spans residues 1-25 (MVTILDRTKPDDKRIRHPEKAHKPD). [4Fe-4S] cluster contacts are provided by C61, C66, C72, C87, C91, C94, and S300. The region spanning 73–289 (WEKKHATFMI…EDIAYTKGFL (217 aa)) is the Radical SAM core domain.

The protein belongs to the radical SAM superfamily. Lipoyl synthase family. Requires [4Fe-4S] cluster as cofactor.

It is found in the cytoplasm. It catalyses the reaction [[Fe-S] cluster scaffold protein carrying a second [4Fe-4S](2+) cluster] + N(6)-octanoyl-L-lysyl-[protein] + 2 oxidized [2Fe-2S]-[ferredoxin] + 2 S-adenosyl-L-methionine + 4 H(+) = [[Fe-S] cluster scaffold protein] + N(6)-[(R)-dihydrolipoyl]-L-lysyl-[protein] + 4 Fe(3+) + 2 hydrogen sulfide + 2 5'-deoxyadenosine + 2 L-methionine + 2 reduced [2Fe-2S]-[ferredoxin]. The protein operates within protein modification; protein lipoylation via endogenous pathway; protein N(6)-(lipoyl)lysine from octanoyl-[acyl-carrier-protein]: step 2/2. Its function is as follows. Catalyzes the radical-mediated insertion of two sulfur atoms into the C-6 and C-8 positions of the octanoyl moiety bound to the lipoyl domains of lipoate-dependent enzymes, thereby converting the octanoylated domains into lipoylated derivatives. The polypeptide is Lipoyl synthase (Allorhizobium ampelinum (strain ATCC BAA-846 / DSM 112012 / S4) (Agrobacterium vitis (strain S4))).